A 411-amino-acid chain; its full sequence is Replication factor C subunit 2 (411 aa).

The segment at 1–36 (MADFFNLKARQQAAAQASSSKTPTSKQESNRLQPWV) is disordered. Positions 11–27 (QQAAAQASSSKTPTSKQ) are enriched in low complexity. ATP-binding positions include Val-36, Arg-40, 73-81 (GPPGTGKTS), Asn-195, and Arg-253.

The protein belongs to the activator 1 small subunits family. As to quaternary structure, heteropentamer of subunits RFC1, RFC2, RFC3, RFC4 and RFC5 that forms a complex with PCNA in the presence of ATP.

It localises to the nucleus. Its function is as follows. The elongation of primed DNA templates by DNA polymerase delta and epsilon requires the action of the accessory proteins proliferating cell nuclear antigen (PCNA) and activator 1. Subunit 2 binds ATP and single-stranded DNA. This Phaeosphaeria nodorum (strain SN15 / ATCC MYA-4574 / FGSC 10173) (Glume blotch fungus) protein is Replication factor C subunit 2 (RFC2).